A 561-amino-acid polypeptide reads, in one-letter code: Putative transport protein KPN78578_08530 (561 aa).

5 helical membrane-spanning segments follow: residues 8–28 (LLNG…LCLG), 37–57 (LGNS…HFAI), 66–86 (FMLF…SIFF), 94–114 (MLAL…GKVF), and 158–178 (HLSL…IVGA). RCK C-terminal domains lie at 202–288 (LDTD…SFRN) and 292–373 (VFDR…RIGF). Helical transmembrane passes span 383-403 (LLAF…TFQF), 406-426 (FSFG…LGFL), 447-467 (FGLM…INNG), 478-498 (AGLI…AYVL), and 540-560 (AIAN…WPGL).

The protein belongs to the AAE transporter (TC 2.A.81) family. YbjL subfamily.

Its subcellular location is the cell membrane. In Klebsiella pneumoniae subsp. pneumoniae (strain ATCC 700721 / MGH 78578), this protein is Putative transport protein KPN78578_08530.